A 206-amino-acid chain; its full sequence is Dephospho-CoA kinase (206 aa).

The region spanning 4-200 (IVALTGGIGS…AYYLQLASQF (197 aa)) is the DPCK domain. Residue 12–17 (GSGKST) participates in ATP binding.

Belongs to the CoaE family.

It localises to the cytoplasm. It carries out the reaction 3'-dephospho-CoA + ATP = ADP + CoA + H(+). It functions in the pathway cofactor biosynthesis; coenzyme A biosynthesis; CoA from (R)-pantothenate: step 5/5. Functionally, catalyzes the phosphorylation of the 3'-hydroxyl group of dephosphocoenzyme A to form coenzyme A. The polypeptide is Dephospho-CoA kinase (Escherichia coli O6:H1 (strain CFT073 / ATCC 700928 / UPEC)).